The chain runs to 331 residues: F-box protein At2g26160 (331 aa).

The 49-residue stretch at 4–52 (PEWSELPGDLINLTANRFSSISDVLRVRSICKPWRSAAATPKSFQCNLP) folds into the F-box domain.

This Arabidopsis thaliana (Mouse-ear cress) protein is F-box protein At2g26160.